The following is an 822-amino-acid chain: A disintegrin and metallopeptidase domain 3 (822 aa).

The N-terminal stretch at 1 to 16 (MLPLFLVLSYLGQVIA) is a signal peptide. A Peptidase M12B domain is found at 187–384 (RILRIKIIMD…PELDCLRNTS (198 aa)). Intrachain disulfides connect Cys296–Cys379, Cys338–Cys363, Cys340–Cys345, Cys456–Cys476, Cys623–Cys635, Cys629–Cys641, and Cys643–Cys652. In terms of domain architecture, Disintegrin spans 395-484 (GSYCGNHLLE…GCAPDTKAAD (90 aa)). Positions 619-653 (GTRECEADDKCQGHGICNNLNNCQCESGFAPPECD) constitute an EGF-like domain. A helical transmembrane segment spans residues 689 to 709 (VLLISFYILLPFLVVLAFMAV).

Interacts with LY6K. Interacts with TEX101. Initially synthesized as a 110-kDa precursor in round spermatids, and the precursor is then processed into a 42-kDa mature protein during the sperm transport into and/or once in the epididymis. In terms of tissue distribution, expressed in sperm (at protein level).

Its subcellular location is the cell membrane. Functionally, involved in fertilization by controlling sperm migration into the oviduct. Promotes the binding of sperm to the oocyte zona pellucida. This chain is A disintegrin and metallopeptidase domain 3, found in Mus musculus (Mouse).